The primary structure comprises 223 residues: Adenylate kinase (223 aa).

10-15 lines the ATP pocket; sequence GSGKGT. Residues 30-59 form an NMP region; it reads ESGAIFREHIGGGTELGKQAKAFIERGDLV. AMP is bound by residues serine 31, arginine 36, 57 to 59, 84 to 87, and glutamine 91; these read DLV and GFPR. The segment at 125–164 is LID; sequence GRRLCKNDNNHPNNIFIDAIKPNGDVCRVCGGELSARSDD. Arginine 126 contributes to the ATP binding site. AMP contacts are provided by arginine 161 and arginine 173. Glycine 209 provides a ligand contact to ATP.

This sequence belongs to the adenylate kinase family. As to quaternary structure, monomer.

It localises to the cytoplasm. It carries out the reaction AMP + ATP = 2 ADP. It functions in the pathway purine metabolism; AMP biosynthesis via salvage pathway; AMP from ADP: step 1/1. In terms of biological role, catalyzes the reversible transfer of the terminal phosphate group between ATP and AMP. Plays an important role in cellular energy homeostasis and in adenine nucleotide metabolism. The polypeptide is Adenylate kinase (Nitratidesulfovibrio vulgaris (strain ATCC 29579 / DSM 644 / CCUG 34227 / NCIMB 8303 / VKM B-1760 / Hildenborough) (Desulfovibrio vulgaris)).